Reading from the N-terminus, the 215-residue chain is Pyrrolidone-carboxylate peptidase (215 aa).

Residues Glu-80, Cys-143, and His-167 contribute to the active site.

The protein belongs to the peptidase C15 family. In terms of assembly, homotetramer.

It is found in the cytoplasm. It catalyses the reaction Release of an N-terminal pyroglutamyl group from a polypeptide, the second amino acid generally not being Pro.. Removes 5-oxoproline from various penultimate amino acid residues except L-proline. The chain is Pyrrolidone-carboxylate peptidase from Bacillus thuringiensis subsp. konkukian (strain 97-27).